Reading from the N-terminus, the 491-residue chain is 3-octaprenyl-4-hydroxybenzoate carboxy-lyase (491 aa).

Asn-172 lines the Mn(2+) pocket. Prenylated FMN is bound by residues 175-177 (IYR), 189-191 (RWL), and 194-195 (RG). Glu-238 is a binding site for Mn(2+). Asp-287 acts as the Proton donor in catalysis.

The protein belongs to the UbiD family. As to quaternary structure, homohexamer. Requires prenylated FMN as cofactor. Mn(2+) serves as cofactor.

Its subcellular location is the cell membrane. It carries out the reaction a 4-hydroxy-3-(all-trans-polyprenyl)benzoate + H(+) = a 2-(all-trans-polyprenyl)phenol + CO2. Its pathway is cofactor biosynthesis; ubiquinone biosynthesis. In terms of biological role, catalyzes the decarboxylation of 3-octaprenyl-4-hydroxy benzoate to 2-octaprenylphenol, an intermediate step in ubiquinone biosynthesis. This Histophilus somni (strain 129Pt) (Haemophilus somnus) protein is 3-octaprenyl-4-hydroxybenzoate carboxy-lyase.